Here is a 266-residue protein sequence, read N- to C-terminus: Glutamate racemase (266 aa).

Substrate-binding positions include 9 to 10 (DS) and 41 to 42 (YG). The active-site Proton donor/acceptor is C72. Residue 73-74 (NT) participates in substrate binding. The Proton donor/acceptor role is filled by C184. 185-186 (TH) provides a ligand contact to substrate.

It belongs to the aspartate/glutamate racemases family.

It catalyses the reaction L-glutamate = D-glutamate. The protein operates within cell wall biogenesis; peptidoglycan biosynthesis. Provides the (R)-glutamate required for cell wall biosynthesis. This chain is Glutamate racemase, found in Staphylococcus aureus (strain bovine RF122 / ET3-1).